Consider the following 300-residue polypeptide: GTPase Era (300 aa).

An Era-type G domain is found at 8-176 (RCGYVAIVGR…EAQIAKHLPE (169 aa)). The G1 stretch occupies residues 16 to 23 (GRPNVGKS). 16 to 23 (GRPNVGKS) serves as a coordination point for GTP. Residues 42–46 (QTTRH) are G2. The tract at residues 63–66 (DTPG) is G3. GTP contacts are provided by residues 63 to 67 (DTPGM) and 125 to 128 (NKTD). Residues 125-128 (NKTD) form a G4 region. The G5 stretch occupies residues 155–157 (ISA). In terms of domain architecture, KH type-2 spans 199 to 283 (VREKIMRQLG…MLNLWVKVKG (85 aa)).

This sequence belongs to the TRAFAC class TrmE-Era-EngA-EngB-Septin-like GTPase superfamily. Era GTPase family. Monomer.

The protein resides in the cytoplasm. The protein localises to the cell inner membrane. An essential GTPase that binds both GDP and GTP, with rapid nucleotide exchange. Plays a role in 16S rRNA processing and 30S ribosomal subunit biogenesis and possibly also in cell cycle regulation and energy metabolism. In Pseudomonas entomophila (strain L48), this protein is GTPase Era.